A 356-amino-acid polypeptide reads, in one-letter code: MQPIPDVNQRIARISAHLHPPKSQMEESSALRRANCRAKGGAPGFKVAILGAAGGIGQPLAMLMKMNPLVSVLHLYDVVNAPGVTADISHMDTGAVVRGFLGQQQLEAALTGMDLIIVPAGVPRKPGMTRDDLFKINAGIVKTLCEGIAKCCPRAIVNLISNPVNSTVPIAAEVFKKAGTYDPKRLLGVTMLDVVRANTFVAEVLGLDPRDVDVPVVGGHAGVTILPLLSQVKPPSSFTQEEISYLTDRIQNGGTEVVEAKAGAGSATLSMAYAAVKFADACLRGLRGDAGVIECAFVSSQVTELPFFASKVRLGRNGIEEVYSLGPLNEYERIGLEKAKKELAGSIEKGVSFIRS.

A glyoxysome-targeting transit peptide spans 1–36 (MQPIPDVNQRIARISAHLHPPKSQMEESSALRRANC). NAD(+)-binding positions include 51-57 (GAAGGIG) and D77. 2 residues coordinate substrate: R124 and R130. Residues N137 and 160-162 (ISN) contribute to the NAD(+) site. Substrate-binding residues include N162 and R196. Catalysis depends on H220, which acts as the Proton acceptor. M271 is a binding site for NAD(+).

This sequence belongs to the LDH/MDH superfamily. MDH type 1 family. Homodimer.

The protein localises to the glyoxysome. It catalyses the reaction (S)-malate + NAD(+) = oxaloacetate + NADH + H(+). The sequence is that of Malate dehydrogenase, glyoxysomal from Citrullus lanatus (Watermelon).